We begin with the raw amino-acid sequence, 547 residues long: DNA polymerase kappa (547 aa).

Residues Leu-18–Ala-39 are disordered. The span at Ile-20–Glu-31 shows a compositional bias: acidic residues. The region spanning Ile-132 to Gly-316 is the UmuC domain. 2 residues coordinate Mg(2+): Asp-136 and Asp-226. A UBZ4-type zinc finger spans residues Thr-489 to Thr-518. Zn(2+) contacts are provided by Cys-492, Cys-495, His-509, and Cys-513.

In terms of assembly, interacts with hus1 and rad17.

Its subcellular location is the cytoplasm. It is found in the nucleus. The enzyme catalyses DNA(n) + a 2'-deoxyribonucleoside 5'-triphosphate = DNA(n+1) + diphosphate. Its function is as follows. DNA polymerase specifically involved in DNA repair. Plays an important role in translesion synthesis, where the normal high-fidelity DNA polymerases cannot proceed and DNA synthesis stalls. Has a role in meiosis. The protein is DNA polymerase kappa (mug40) of Schizosaccharomyces pombe (strain 972 / ATCC 24843) (Fission yeast).